The following is a 499-amino-acid chain: Ribose import ATP-binding protein RbsA 1 (499 aa).

2 consecutive ABC transporter domains span residues 5 to 240 (LEMR…GRSI) and 249 to 494 (TEPG…TAGS). 37-44 (GENGAGKS) lines the ATP pocket.

It belongs to the ABC transporter superfamily. Ribose importer (TC 3.A.1.2.1) family. As to quaternary structure, the complex is composed of an ATP-binding protein (RbsA), two transmembrane proteins (RbsC) and a solute-binding protein (RbsB).

It is found in the cell membrane. It catalyses the reaction D-ribose(out) + ATP + H2O = D-ribose(in) + ADP + phosphate + H(+). Its function is as follows. Part of the ABC transporter complex RbsABC involved in ribose import. Responsible for energy coupling to the transport system. The sequence is that of Ribose import ATP-binding protein RbsA 1 from Rubrobacter xylanophilus (strain DSM 9941 / JCM 11954 / NBRC 16129 / PRD-1).